A 153-amino-acid chain; its full sequence is Endoribonuclease YbeY (153 aa).

The Zn(2+) site is built by H114, H118, and H124.

This sequence belongs to the endoribonuclease YbeY family. Zn(2+) serves as cofactor.

The protein localises to the cytoplasm. Its function is as follows. Single strand-specific metallo-endoribonuclease involved in late-stage 70S ribosome quality control and in maturation of the 3' terminus of the 16S rRNA. The sequence is that of Endoribonuclease YbeY from Shewanella baltica (strain OS223).